The sequence spans 259 residues: Phosphate import ATP-binding protein PstB 1 (259 aa).

The ABC transporter domain maps to 7–254; the sequence is VKPEDVYQIN…PDDHRTKDYI (248 aa). 45 to 52 provides a ligand contact to ATP; it reads GPSGCGKS.

It belongs to the ABC transporter superfamily. Phosphate importer (TC 3.A.1.7) family. The complex is composed of two ATP-binding proteins (PstB), two transmembrane proteins (PstC and PstA) and a solute-binding protein (PstS).

The protein resides in the cell membrane. The catalysed reaction is phosphate(out) + ATP + H2O = ADP + 2 phosphate(in) + H(+). In terms of biological role, part of the ABC transporter complex PstSACB involved in phosphate import. Responsible for energy coupling to the transport system. This Bacillus licheniformis (strain ATCC 14580 / DSM 13 / JCM 2505 / CCUG 7422 / NBRC 12200 / NCIMB 9375 / NCTC 10341 / NRRL NRS-1264 / Gibson 46) protein is Phosphate import ATP-binding protein PstB 1.